Consider the following 103-residue polypeptide: Nucleoid-associated protein A2cp1_3777 (103 aa).

It belongs to the YbaB/EbfC family. Homodimer.

The protein resides in the cytoplasm. Its subcellular location is the nucleoid. Functionally, binds to DNA and alters its conformation. May be involved in regulation of gene expression, nucleoid organization and DNA protection. The sequence is that of Nucleoid-associated protein A2cp1_3777 from Anaeromyxobacter dehalogenans (strain 2CP-1 / ATCC BAA-258).